The sequence spans 499 residues: Proline--tRNA ligase (499 aa).

The segment covering 1–17 has biased composition (basic and acidic residues); sequence MTKDGGKKDNQGQDKKA. Residues 1–21 are disordered; that stretch reads MTKDGGKKDNQGQDKKAQQYG.

The protein belongs to the class-II aminoacyl-tRNA synthetase family. ProS type 3 subfamily. In terms of assembly, homodimer.

The protein localises to the cytoplasm. It catalyses the reaction tRNA(Pro) + L-proline + ATP = L-prolyl-tRNA(Pro) + AMP + diphosphate. Its function is as follows. Catalyzes the attachment of proline to tRNA(Pro) in a two-step reaction: proline is first activated by ATP to form Pro-AMP and then transferred to the acceptor end of tRNA(Pro). Can inadvertently accommodate and process cysteine. This chain is Proline--tRNA ligase (proS), found in Deinococcus radiodurans (strain ATCC 13939 / DSM 20539 / JCM 16871 / CCUG 27074 / LMG 4051 / NBRC 15346 / NCIMB 9279 / VKM B-1422 / R1).